A 299-amino-acid chain; its full sequence is HTH-type transcriptional regulator ArgP (299 aa).

The HTH lysR-type domain occupies 2 to 58 (FDYKLLSALAAVIEQAGFERAAQVLGLSQSAISQRIKLLEARVGQPVLVRVTPPAPT). A DNA-binding region (H-T-H motif) is located at residues 19–38 (FERAAQVLGLSQSAISQRIK).

It belongs to the LysR transcriptional regulatory family. As to quaternary structure, homodimer.

Its function is as follows. Controls the transcription of genes involved in arginine and lysine metabolism. This chain is HTH-type transcriptional regulator ArgP, found in Pseudomonas fluorescens (strain ATCC BAA-477 / NRRL B-23932 / Pf-5).